A 277-amino-acid chain; its full sequence is Orotidine 5'-phosphate decarboxylase (277 aa).

Residues D40, 62 to 64, 93 to 102, Y229, and R247 each bind substrate; these read KTH and DRKFIDIGNT. K95 (proton donor) is an active-site residue.

It belongs to the OMP decarboxylase family.

It catalyses the reaction orotidine 5'-phosphate + H(+) = UMP + CO2. Its pathway is pyrimidine metabolism; UMP biosynthesis via de novo pathway; UMP from orotate: step 2/2. The chain is Orotidine 5'-phosphate decarboxylase (pyrG) from Aspergillus awamori (Black koji mold).